Reading from the N-terminus, the 362-residue chain is Ferrochelatase (362 aa).

Fe cation-binding residues include His-228 and Glu-309.

It belongs to the ferrochelatase family.

Its subcellular location is the cytoplasm. It catalyses the reaction heme b + 2 H(+) = protoporphyrin IX + Fe(2+). Its pathway is porphyrin-containing compound metabolism; protoheme biosynthesis; protoheme from protoporphyrin-IX: step 1/1. In terms of biological role, catalyzes the ferrous insertion into protoporphyrin IX. This is Ferrochelatase from Bordetella parapertussis (strain 12822 / ATCC BAA-587 / NCTC 13253).